Consider the following 404-residue polypeptide: Metacaspase-1A (404 aa).

Basic residues predominate over residues 1-10; sequence MNPHHSHHHS. Residues 1-100 are disordered; that stretch reads MNPHHSHHHS…PSDPVSFGQG (100 aa). The span at 24-51 shows a compositional bias: low complexity; it reads QQQPPSNPYQYNQPSPQPYQGSQPPQNG. Active-site residues include His-200 and Cys-256.

It belongs to the peptidase C14B family.

Its function is as follows. Involved in cell death (apoptosis). The sequence is that of Metacaspase-1A (casA) from Aspergillus niger (strain ATCC MYA-4892 / CBS 513.88 / FGSC A1513).